A 112-amino-acid chain; its full sequence is UPF0122 protein CPR_1686 (112 aa).

This sequence belongs to the UPF0122 family.

Might take part in the signal recognition particle (SRP) pathway. This is inferred from the conservation of its genetic proximity to ftsY/ffh. May be a regulatory protein. The sequence is that of UPF0122 protein CPR_1686 from Clostridium perfringens (strain SM101 / Type A).